We begin with the raw amino-acid sequence, 332 residues long: tRNA dimethylallyltransferase (332 aa).

Residue 14–21 coordinates ATP; that stretch reads GPTASGKT. 16-21 is a binding site for substrate; that stretch reads TASGKT. The interaction with substrate tRNA stretch occupies residues 39–42; the sequence is DSMQ. Positions 313-332 are disordered; the sequence is KRSSKHDCKPQHPRSSTREL. Positions 317 to 332 are enriched in basic and acidic residues; it reads KHDCKPQHPRSSTREL.

Belongs to the IPP transferase family. Monomer. It depends on Mg(2+) as a cofactor.

It catalyses the reaction adenosine(37) in tRNA + dimethylallyl diphosphate = N(6)-dimethylallyladenosine(37) in tRNA + diphosphate. Functionally, catalyzes the transfer of a dimethylallyl group onto the adenine at position 37 in tRNAs that read codons beginning with uridine, leading to the formation of N6-(dimethylallyl)adenosine (i(6)A). The protein is tRNA dimethylallyltransferase of Staphylococcus haemolyticus (strain JCSC1435).